We begin with the raw amino-acid sequence, 365 residues long: SWR1 complex subunit 2 (365 aa).

Disordered stretches follow at residues 43-83 (ALKE…NEKE) and 95-147 (PGKT…EGEK). Positions 48 to 74 (EHDDEYEAEREVADEFDSDFNDDEPEP) are enriched in acidic residues. Residues 99-108 (ASKKKKKKTK) are compositionally biased toward basic residues. Residues 118–132 (GDEKPGEELGNKEQE) show a composition bias toward basic and acidic residues. 2 coiled-coil regions span residues 123–150 (GEEL…KVIR) and 184–225 (GEEK…KAIV). Acidic residues predominate over residues 133 to 144 (EKEENEAQEDME). A disordered region spans residues 333-365 (RTKIPKSNKSFSLRSSARFLSSESEEESEEDSD). Positions 342–354 (SFSLRSSARFLSS) are enriched in low complexity. A compositionally biased stretch (acidic residues) spans 355-365 (ESEEESEEDSD).

It belongs to the VPS72/YL1 family. In terms of assembly, component of the SWR1 chromatin-remodeling complex composed of at least ARP6/ESD1/SUF3, PIE1, SWC6, SWC2 and H2AZs (HTA8, HTA9, HTA11). Interacts directly with SWC6 and H2AZs, but not with ARP6.

In terms of biological role, component of the SWR1 complex which mediates the ATP-dependent exchange of histone H2A for the H2A variant H2A.F/Z leading to transcriptional regulation of selected genes (e.g. FLC) by chromatin remodeling. The sequence is that of SWR1 complex subunit 2 (SWC2) from Arabidopsis thaliana (Mouse-ear cress).